We begin with the raw amino-acid sequence, 255 residues long: Probable iron chelatin transport ATP-binding protein HP_0888 (255 aa).

One can recognise an ABC transporter domain in the interval 3 to 240; sequence LEVKNLSFKY…HNLSALYDTP (238 aa). 35-42 is an ATP binding site; the sequence is APNGSGKT.

It belongs to the ABC transporter superfamily.

Its subcellular location is the cell inner membrane. Its function is as follows. Part of a binding-protein-dependent transport system for an iron chelatin. Probably responsible for energy coupling to the transport system (Potential). The sequence is that of Probable iron chelatin transport ATP-binding protein HP_0888 from Helicobacter pylori (strain ATCC 700392 / 26695) (Campylobacter pylori).